A 417-amino-acid chain; its full sequence is Blood group Rh(CE) polypeptide (417 aa).

11 helical membrane passes run 12–32, 44–64, 77–97, 125–145, 172–192, 203–223, 238–258, 265–285, 287–307, 331–351, and 358–378; these read CLPLCALTLEAALILLFYFFT, LVASYQVGQDLTVMAALGLGF, VAFNLFMLALGVQWAILLDGF, ISAGAVLGKVNLAQLVVMVLV, FYVFAAYFGLTVAWCLPKPLP, TIPSLSAMLGALFLWMFWPSV, MFNTYYALAVSVVTAISGSSL, ISMTYVHSAVLAGGVAVGTSC, LIPSPWLAMVLGLVAGLISIG, IFSLLGLLGEITYIVLLVLHT, and MIGFQVLLSIGELSLAIVIAL.

Belongs to the ammonium transporter (TC 2.A.49) family. Rh subfamily. Heterotrimer; a RHCE monomer interacts with a RHAG homodimer. Component of the ankyrin-1 complex in the erythrocyte, composed of ANK1, RHCE, RHAG, SLC4A1, EPB42, GYPA, GYPB and AQP1. Interacts (via the N- and C-terminal) with ANK1 (via ANk 1-5 repeats); mediates the primary membrane attachment site for ANK1. As to expression, restricted to tissues or cell lines expressing erythroid characters. Isoform 4g and isoform RhPI-Alpha are expressed in immature erythroblasts but not in mature erythroblasts.

The protein localises to the membrane. Component of the ankyrin-1 complex, a multiprotein complex involved in the stability and shape of the erythrocyte membrane. Mediates the primary membrane attachment site for ANK1 when associated with RHAG. May participate in the ammonium and carbon dioxide transport through the heterotrimer form. The polypeptide is Blood group Rh(CE) polypeptide (Homo sapiens (Human)).